Reading from the N-terminus, the 315-residue chain is Methionyl-tRNA formyltransferase (315 aa).

Position 113 to 116 (113 to 116 (SLLP)) interacts with (6S)-5,6,7,8-tetrahydrofolate.

This sequence belongs to the Fmt family.

It carries out the reaction L-methionyl-tRNA(fMet) + (6R)-10-formyltetrahydrofolate = N-formyl-L-methionyl-tRNA(fMet) + (6S)-5,6,7,8-tetrahydrofolate + H(+). Its function is as follows. Attaches a formyl group to the free amino group of methionyl-tRNA(fMet). The formyl group appears to play a dual role in the initiator identity of N-formylmethionyl-tRNA by promoting its recognition by IF2 and preventing the misappropriation of this tRNA by the elongation apparatus. In Pseudoalteromonas atlantica (strain T6c / ATCC BAA-1087), this protein is Methionyl-tRNA formyltransferase.